The chain runs to 171 residues: Large ribosomal subunit protein uL10 (171 aa).

It belongs to the universal ribosomal protein uL10 family. As to quaternary structure, part of the ribosomal stalk of the 50S ribosomal subunit. The N-terminus interacts with L11 and the large rRNA to form the base of the stalk. The C-terminus forms an elongated spine to which L12 dimers bind in a sequential fashion forming a multimeric L10(L12)X complex.

Forms part of the ribosomal stalk, playing a central role in the interaction of the ribosome with GTP-bound translation factors. In Corynebacterium glutamicum (strain ATCC 13032 / DSM 20300 / JCM 1318 / BCRC 11384 / CCUG 27702 / LMG 3730 / NBRC 12168 / NCIMB 10025 / NRRL B-2784 / 534), this protein is Large ribosomal subunit protein uL10.